The following is a 1319-amino-acid chain: Protein Jumonji (1319 aa).

Basic residues predominate over residues Met1–Ile11. Disordered stretches follow at residues Met1–Trp23, Asp50–Pro130, Asp173–Gly265, Tyr351–Asn382, His396–Asn478, Pro499–Ala537, and Gln549–Ala599. Residues Ala61–Gly70 are compositionally biased toward polar residues. The segment covering Gly74–Gly88 has biased composition (basic and acidic residues). The Nuclear localization signal motif lies at Pro96–Arg102. A compositionally biased stretch (basic residues) spans Lys98–Arg107. Positions Phe109–Pro121 are enriched in polar residues. Positions Asp173–Glu185 are enriched in acidic residues. A compositionally biased stretch (polar residues) spans Val191 to Pro200. The span at Lys221 to His251 shows a compositional bias: basic and acidic residues. Residues Leu372–Asn382 show a composition bias toward polar residues. The span at Ser413–Val424 shows a compositional bias: basic and acidic residues. A compositionally biased stretch (pro residues) spans Pro505–Pro515. 2 stretches are compositionally biased toward low complexity: residues Ala516–Ala525 and Thr554–Ser570. Basic and acidic residues predominate over residues Arg583 to Arg598. In terms of domain architecture, JmjN spans Val607–Glu648. Positions Trp671–Pro779 constitute an ARID domain. A compositionally biased stretch (basic and acidic residues) spans Arg798–His811. The tract at residues Arg798–Arg818 is disordered. The GSGFP motif motif lies at Gly944–Pro948. The region spanning Pro954–Lys1118 is the JmjC domain.

Belongs to the JARID2 family. As to quaternary structure, associates with the PRC2 complex.

It is found in the nucleus. In terms of biological role, regulator of histone methyltransferase complexes that plays an essential role in embryonic development. Acts by modulating histone methyltransferase activity and promoting the recruitment of histone methyltransferase complexes to their target genes. Binds DNA and mediates the recruitment of the PRC2 complex to target genes in embryonic stem cells. Does not have histone demethylase activity but regulates activity of various histone methyltransferase complexes. In embryonic stem cells, it associates with the PRC2 complex and inhibits trimethylation of 'Lys-27' of histone H3 (H3K27me3) by the PRC2 complex, thereby playing a key role in differentiation of embryonic stem cells and normal development. This chain is Protein Jumonji (jarid2b), found in Danio rerio (Zebrafish).